Consider the following 756-residue polypeptide: Glutathione biosynthesis bifunctional protein GshAB (756 aa).

The interval 1–338 (MNYRELMQKK…TGDIFNEQVA (338 aa)) is glutamate--cysteine ligase. Positions 493–751 (KKILSAAGFH…LTMDVLKLLY (259 aa)) constitute an ATP-grasp domain. 520–578 (LRYANKAFVVKPKSTNYGLGITIFKEGASLEDFTEALRIAFKEDTAVLIEEFLPGTEYR) lines the ATP pocket. Asp700, Glu721, and Asn723 together coordinate Mg(2+). Positions 700, 721, and 723 each coordinate Mn(2+).

In the N-terminal section; belongs to the glutamate--cysteine ligase type 1 family. Type 2 subfamily. Monomer. It depends on Mg(2+) as a cofactor. Mn(2+) is required as a cofactor.

The enzyme catalyses L-cysteine + L-glutamate + ATP = gamma-L-glutamyl-L-cysteine + ADP + phosphate + H(+). It catalyses the reaction gamma-L-glutamyl-L-cysteine + glycine + ATP = glutathione + ADP + phosphate + H(+). It functions in the pathway sulfur metabolism; glutathione biosynthesis; glutathione from L-cysteine and L-glutamate: step 1/2. It participates in sulfur metabolism; glutathione biosynthesis; glutathione from L-cysteine and L-glutamate: step 2/2. Synthesizes glutathione from L-glutamate and L-cysteine via gamma-L-glutamyl-L-cysteine. The polypeptide is Glutathione biosynthesis bifunctional protein GshAB (Enterococcus faecalis (strain ATCC 700802 / V583)).